Reading from the N-terminus, the 557-residue chain is Formate--tetrahydrofolate ligase (557 aa).

Residue 67–74 coordinates ATP; it reads TPAGEGKS.

This sequence belongs to the formate--tetrahydrofolate ligase family.

The enzyme catalyses (6S)-5,6,7,8-tetrahydrofolate + formate + ATP = (6R)-10-formyltetrahydrofolate + ADP + phosphate. The protein operates within one-carbon metabolism; tetrahydrofolate interconversion. This chain is Formate--tetrahydrofolate ligase, found in Latilactobacillus sakei subsp. sakei (strain 23K) (Lactobacillus sakei subsp. sakei).